The sequence spans 174 residues: NADH-quinone oxidoreductase subunit C (174 aa).

This sequence belongs to the complex I 30 kDa subunit family. NDH-1 is composed of 14 different subunits. Subunits NuoB, C, D, E, F, and G constitute the peripheral sector of the complex.

It localises to the cell membrane. It carries out the reaction a quinone + NADH + 5 H(+)(in) = a quinol + NAD(+) + 4 H(+)(out). Its function is as follows. NDH-1 shuttles electrons from NADH, via FMN and iron-sulfur (Fe-S) centers, to quinones in the respiratory chain. The immediate electron acceptor for the enzyme in this species is believed to be ubiquinone. Couples the redox reaction to proton translocation (for every two electrons transferred, four hydrogen ions are translocated across the cytoplasmic membrane), and thus conserves the redox energy in a proton gradient. The polypeptide is NADH-quinone oxidoreductase subunit C (Roseiflexus castenholzii (strain DSM 13941 / HLO8)).